We begin with the raw amino-acid sequence, 219 residues long: Claudin-6 (219 aa).

Residues 1–7 (MASTGLQ) are Cytoplasmic-facing. A helical membrane pass occupies residues 8–28 (ILGIVLTLLGWVNALVSCALP). Residues 29-81 (MWKVTAFIGNSIVVAQMVWEGLWMSCVVQSTGQMQCKVYDSLLALPQDLQAAR) lie on the Extracellular side of the membrane. The chain crosses the membrane as a helical span at residues 82–102 (ALCVVTLLIVLLGLLVYLAGA). Topologically, residues 103-116 (KCTTCVEDRNSKSR) are cytoplasmic. Residues 117–137 (LVLISGIIFVISGVLTLIPVC) traverse the membrane as a helical segment. Residues 138-163 (WTAHSIIQDFYNPLVADAQKRELGAS) lie on the Extracellular side of the membrane. A helical membrane pass occupies residues 164 to 184 (LYLGWAASGLLLLGGGLLCCA). The Cytoplasmic portion of the chain corresponds to 185 to 219 (CSSGGTQGPRHYMACYSTSVPHSRGPSEYPTKNYV). Phosphoserine occurs at positions 201, 203, 207, and 211. An interactions with TJP1, TJP2 and TJP3 region spans residues 218-219 (YV).

The protein belongs to the claudin family. As to quaternary structure, directly interacts with TJP1/ZO-1, TJP2/ZO-2 and TJP3/ZO-3. Interacts with CLDN1, CD81 and OCLN. Expressed mostly in embryonic tissues.

The protein localises to the cell junction. The protein resides in the tight junction. Its subcellular location is the cell membrane. Its function is as follows. Plays a major role in tight junction-specific obliteration of the intercellular space, through calcium-independent cell-adhesion activity. The protein is Claudin-6 (Cldn6) of Mus musculus (Mouse).